Here is a 439-residue protein sequence, read N- to C-terminus: O-fucosyltransferase 13 (439 aa).

Residues 8–28 (PLFVFVLTFSLLLVVILLSPS) form a helical; Signal-anchor for type II membrane protein membrane-spanning segment. N-linked (GlcNAc...) asparagine glycans are attached at residues asparagine 104 and asparagine 119. 238–240 (HLR) contributes to the substrate binding site. Residue asparagine 293 is glycosylated (N-linked (GlcNAc...) asparagine).

It belongs to the glycosyltransferase GT106 family.

Its subcellular location is the membrane. The protein operates within glycan metabolism. The polypeptide is O-fucosyltransferase 13 (Arabidopsis thaliana (Mouse-ear cress)).